The sequence spans 85 residues: Toxin BmKITc (85 aa).

An N-terminal signal peptide occupies residues 1-21; it reads MKLFLLLVIFASMLNDGLVNA. In terms of domain architecture, LCN-type CS-alpha/beta spans 22 to 82; it reads DGYIRGSDGC…KWKYESNTCG (61 aa). 4 cysteine pairs are disulfide-bonded: C31–C81, C35–C56, C42–C63, and C46–C65.

This sequence belongs to the long (4 C-C) scorpion toxin superfamily. Sodium channel inhibitor family. Beta subfamily. Expressed by the venom gland.

Its subcellular location is the secreted. Functionally, depressant insect beta-toxins cause a transient contraction paralysis followed by a slow flaccid paralysis. They bind voltage-independently at site-4 of sodium channels (Nav) and shift the voltage of activation toward more negative potentials thereby affecting sodium channel activation and promoting spontaneous and repetitive firing. In Olivierus martensii (Manchurian scorpion), this protein is Toxin BmKITc.